The primary structure comprises 371 residues: DNA replication and repair protein RecF (371 aa).

30 to 37 serves as a coordination point for ATP; it reads GENAQGKT.

The protein belongs to the RecF family.

It is found in the cytoplasm. Its function is as follows. The RecF protein is involved in DNA metabolism; it is required for DNA replication and normal SOS inducibility. RecF binds preferentially to single-stranded, linear DNA. It also seems to bind ATP. The sequence is that of DNA replication and repair protein RecF from Staphylococcus epidermidis (strain ATCC 12228 / FDA PCI 1200).